A 546-amino-acid polypeptide reads, in one-letter code: Chaperonin GroEL 2 (546 aa).

ATP-binding positions include T30–P33, K51, D87–T91, G415, and D496.

It belongs to the chaperonin (HSP60) family. Forms a cylinder of 14 subunits composed of two heptameric rings stacked back-to-back. Interacts with the co-chaperonin GroES.

It localises to the cytoplasm. It catalyses the reaction ATP + H2O + a folded polypeptide = ADP + phosphate + an unfolded polypeptide.. Its function is as follows. Together with its co-chaperonin GroES, plays an essential role in assisting protein folding. The GroEL-GroES system forms a nano-cage that allows encapsulation of the non-native substrate proteins and provides a physical environment optimized to promote and accelerate protein folding. The chain is Chaperonin GroEL 2 from Bradyrhizobium sp. (strain ORS 278).